The sequence spans 507 residues: ATP synthase subunit alpha, plastid (507 aa).

170–177 (GDRQTGKT) is a binding site for ATP.

The protein belongs to the ATPase alpha/beta chains family. In terms of assembly, F-type ATPases have 2 components, CF(1) - the catalytic core - and CF(0) - the membrane proton channel. CF(1) has five subunits: alpha(3), beta(3), gamma(1), delta(1), epsilon(1). CF(0) has four main subunits: a, b, b' and c.

The protein localises to the plastid membrane. It carries out the reaction ATP + H2O + 4 H(+)(in) = ADP + phosphate + 5 H(+)(out). Its function is as follows. Produces ATP from ADP in the presence of a proton gradient across the membrane. The alpha chain is a regulatory subunit. This Cuscuta gronovii (Common dodder) protein is ATP synthase subunit alpha, plastid.